We begin with the raw amino-acid sequence, 507 residues long: ATP synthase subunit alpha, chloroplastic (507 aa).

169–176 (IGDRQTGK) is an ATP binding site.

The protein belongs to the ATPase alpha/beta chains family. In terms of assembly, F-type ATPases have 2 components, CF(1) - the catalytic core - and CF(0) - the membrane proton channel. CF(1) has five subunits: alpha(3), beta(3), gamma(1), delta(1), epsilon(1). CF(0) has four main subunits: a, b, b' and c.

The protein resides in the plastid. The protein localises to the chloroplast thylakoid membrane. It carries out the reaction ATP + H2O + 4 H(+)(in) = ADP + phosphate + 5 H(+)(out). In terms of biological role, produces ATP from ADP in the presence of a proton gradient across the membrane. The alpha chain is a regulatory subunit. The chain is ATP synthase subunit alpha, chloroplastic from Saccharum hybrid (Sugarcane).